Reading from the N-terminus, the 375-residue chain is Dual-specificity RNA methyltransferase RlmN (375 aa).

The active-site Proton acceptor is the Glu93. Residues 99–346 (ETNRGTLCVS…TTTRKTRGDD (248 aa)) form the Radical SAM core domain. Residues Cys106 and Cys351 are joined by a disulfide bond. [4Fe-4S] cluster-binding residues include Cys113, Cys117, and Cys120. Residues 177 to 178 (GE), Ser209, 231 to 233 (SLH), and Asn308 contribute to the S-adenosyl-L-methionine site. Cys351 serves as the catalytic S-methylcysteine intermediate.

It belongs to the radical SAM superfamily. RlmN family. It depends on [4Fe-4S] cluster as a cofactor.

It is found in the cytoplasm. It catalyses the reaction adenosine(2503) in 23S rRNA + 2 reduced [2Fe-2S]-[ferredoxin] + 2 S-adenosyl-L-methionine = 2-methyladenosine(2503) in 23S rRNA + 5'-deoxyadenosine + L-methionine + 2 oxidized [2Fe-2S]-[ferredoxin] + S-adenosyl-L-homocysteine. The enzyme catalyses adenosine(37) in tRNA + 2 reduced [2Fe-2S]-[ferredoxin] + 2 S-adenosyl-L-methionine = 2-methyladenosine(37) in tRNA + 5'-deoxyadenosine + L-methionine + 2 oxidized [2Fe-2S]-[ferredoxin] + S-adenosyl-L-homocysteine. Specifically methylates position 2 of adenine 2503 in 23S rRNA and position 2 of adenine 37 in tRNAs. m2A2503 modification seems to play a crucial role in the proofreading step occurring at the peptidyl transferase center and thus would serve to optimize ribosomal fidelity. In Azoarcus sp. (strain BH72), this protein is Dual-specificity RNA methyltransferase RlmN.